Here is a 168-residue protein sequence, read N- to C-terminus: uncharacterized protein (168 aa).

The chain crosses the membrane as a helical span at residues 36–56 (LNWWQLIVVVGIAISGIAAIA). Asn74 is a glycosylation site (N-linked (GlcNAc...) asparagine; by host). 3 helical membrane passes run 86–106 (FIII…LAWL), 115–135 (KLLT…ALTI), and 143–163 (MVKL…GFFI). N-linked (GlcNAc...) asparagine; by host glycosylation occurs at Asn164.

The protein localises to the membrane. This is an uncharacterized protein from Acanthamoeba polyphaga mimivirus (APMV).